The primary structure comprises 106 residues: ATP-dependent Clp protease adapter protein ClpS (106 aa).

This sequence belongs to the ClpS family. As to quaternary structure, binds to the N-terminal domain of the chaperone ClpA.

Involved in the modulation of the specificity of the ClpAP-mediated ATP-dependent protein degradation. This is ATP-dependent Clp protease adapter protein ClpS from Salmonella agona (strain SL483).